The sequence spans 361 residues: Phosphoserine aminotransferase (361 aa).

Position 42 (Arg42) interacts with L-glutamate. Pyridoxal 5'-phosphate is bound by residues 76–77 (AT), Trp102, Thr152, Asp172, and Gln195. Lys196 is subject to N6-(pyridoxal phosphate)lysine. Residue 237-238 (NT) participates in pyridoxal 5'-phosphate binding.

Belongs to the class-V pyridoxal-phosphate-dependent aminotransferase family. SerC subfamily. Homodimer. It depends on pyridoxal 5'-phosphate as a cofactor.

Its subcellular location is the cytoplasm. It carries out the reaction O-phospho-L-serine + 2-oxoglutarate = 3-phosphooxypyruvate + L-glutamate. The catalysed reaction is 4-(phosphooxy)-L-threonine + 2-oxoglutarate = (R)-3-hydroxy-2-oxo-4-phosphooxybutanoate + L-glutamate. The protein operates within amino-acid biosynthesis; L-serine biosynthesis; L-serine from 3-phospho-D-glycerate: step 2/3. Its pathway is cofactor biosynthesis; pyridoxine 5'-phosphate biosynthesis; pyridoxine 5'-phosphate from D-erythrose 4-phosphate: step 3/5. Catalyzes the reversible conversion of 3-phosphohydroxypyruvate to phosphoserine and of 3-hydroxy-2-oxo-4-phosphonooxybutanoate to phosphohydroxythreonine. The polypeptide is Phosphoserine aminotransferase (Xanthomonas euvesicatoria pv. vesicatoria (strain 85-10) (Xanthomonas campestris pv. vesicatoria)).